A 335-amino-acid polypeptide reads, in one-letter code: NAC domain-containing protein 60 (335 aa).

The region spanning 14 to 156 (TFPGFKFSPT…ALVICRLRRN (143 aa)) is the NAC domain. Residues 112 to 162 (IGTKRTLVFHIGRAPKGGRTEWLMHEYCMIGVSLDALVICRLRRNTEFQGS) mediate DNA binding. A helical membrane pass occupies residues 315 to 335 (ARWDVVVWLLVMIAVLVFYLV).

In terms of tissue distribution, expressed in roots, rosette leaves, cauline leaves, shoot apex, stems and flowers.

It is found in the membrane. The protein resides in the nucleus. Functionally, transcriptional activator activated by proteolytic cleavage through regulated intramembrane proteolysis (RIP). Transcription factor involved in modulation of abscisic acid (ABA) signaling. Attenuates ABA sensitivity and glucose-induced ABA accumulation. Reduces the expression of ABI4 gene. The polypeptide is NAC domain-containing protein 60 (Arabidopsis thaliana (Mouse-ear cress)).